The sequence spans 325 residues: Beta-ketoacyl-[acyl-carrier-protein] synthase III (325 aa).

Residues Cys-119 and His-252 contribute to the active site. The interval 253 to 257 (QANIR) is ACP-binding. Asn-282 is a catalytic residue.

It belongs to the thiolase-like superfamily. FabH family. Homodimer.

The protein resides in the cytoplasm. It catalyses the reaction malonyl-[ACP] + acetyl-CoA + H(+) = 3-oxobutanoyl-[ACP] + CO2 + CoA. It participates in lipid metabolism; fatty acid biosynthesis. Catalyzes the condensation reaction of fatty acid synthesis by the addition to an acyl acceptor of two carbons from malonyl-ACP. Catalyzes the first condensation reaction which initiates fatty acid synthesis and may therefore play a role in governing the total rate of fatty acid production. Possesses both acetoacetyl-ACP synthase and acetyl transacylase activities. Its substrate specificity determines the biosynthesis of branched-chain and/or straight-chain of fatty acids. The sequence is that of Beta-ketoacyl-[acyl-carrier-protein] synthase III from Paracidovorax citrulli (strain AAC00-1) (Acidovorax citrulli).